A 709-amino-acid chain; its full sequence is Polyribonucleotide nucleotidyltransferase (709 aa).

Mg(2+)-binding residues include Asp485 and Asp491. The KH domain occupies 552 to 611 (PRIYTMKIDPKKIKDVIGKGGATIRSLTEETGTSIDIDDDGTVKIAAVDSNAAKNVMGRI). Positions 621-689 (GAIYKGKVTR…RQGRIRLTMK (69 aa)) constitute an S1 motif domain.

This sequence belongs to the polyribonucleotide nucleotidyltransferase family. In terms of assembly, component of the RNA degradosome, which is a multiprotein complex involved in RNA processing and mRNA degradation. The cofactor is Mg(2+).

It localises to the cytoplasm. It catalyses the reaction RNA(n+1) + phosphate = RNA(n) + a ribonucleoside 5'-diphosphate. In terms of biological role, involved in mRNA degradation. Catalyzes the phosphorolysis of single-stranded polyribonucleotides processively in the 3'- to 5'-direction. This is Polyribonucleotide nucleotidyltransferase from Haemophilus influenzae (strain PittEE).